Here is a 142-residue protein sequence, read N- to C-terminus: Large ribosomal subunit protein uL13 (142 aa).

The protein belongs to the universal ribosomal protein uL13 family. In terms of assembly, part of the 50S ribosomal subunit.

Functionally, this protein is one of the early assembly proteins of the 50S ribosomal subunit, although it is not seen to bind rRNA by itself. It is important during the early stages of 50S assembly. The sequence is that of Large ribosomal subunit protein uL13 from Psychrobacter sp. (strain PRwf-1).